The primary structure comprises 401 residues: Nodal homolog 3-C (401 aa).

An N-terminal signal peptide occupies residues 1–18; sequence MAFLSLFLCLVFSSPLMA. Residues 19 to 274 constitute a propeptide that is removed on maturation; the sequence is MPPALQGRKA…KVNGFRRLRR (256 aa). Residues Asn-168, Asn-337, and Asn-344 are each glycosylated (N-linked (GlcNAc...) asparagine). Disulfide bonds link Cys-299-Cys-365 and Cys-328-Cys-396.

The protein belongs to the TGF-beta family. In terms of assembly, monomer. The propeptide region interacts with bmp4 in a non-covalent manner. As to expression, expressed in the dorsal marginal region of late blastula, becoming restricted to the Spemann organizer at the early gastrula stage.

Its subcellular location is the secreted. Exhibits mesoderm-dorsalizing activity and neural-inducing activity, but lacks mesoderm-inducing activity. Regulates the expression of specific mesodermal and neural genes. Induces convergent extension movements at the embryonic midline by activating the fgf signaling pathway to induce t/bra expression in the organizer region. Acts with wnt11 to induce Spemann organizer cells and induce axis formation. The unprocessed protein antagonizes bmp-signaling. The chain is Nodal homolog 3-C from Xenopus tropicalis (Western clawed frog).